We begin with the raw amino-acid sequence, 371 residues long: Glutamate 5-kinase 2 (371 aa).

Position 13 (lysine 13) interacts with ATP. Positions 53, 140, and 152 each coordinate substrate. ATP is bound by residues 172–173 and 214–220; these read SD and TGGMRSK. The PUA domain maps to 280-356; sequence EGEMILSDDC…KELTNRALID (77 aa).

It belongs to the glutamate 5-kinase family.

The protein localises to the cytoplasm. It carries out the reaction L-glutamate + ATP = L-glutamyl 5-phosphate + ADP. Its pathway is amino-acid biosynthesis; L-proline biosynthesis; L-glutamate 5-semialdehyde from L-glutamate: step 1/2. Catalyzes the transfer of a phosphate group to glutamate to form L-glutamate 5-phosphate. This chain is Glutamate 5-kinase 2 (proJ), found in Bacillus subtilis (strain 168).